The following is a 149-amino-acid chain: Ribonuclease H (149 aa).

One can recognise an RNase H type-1 domain in the interval 1-143 (MNAVEIYTDG…ADMLANRGVE (143 aa)). Mg(2+) is bound by residues D9, E47, D69, and D135.

It belongs to the RNase H family. Monomer. It depends on Mg(2+) as a cofactor.

Its subcellular location is the cytoplasm. The catalysed reaction is Endonucleolytic cleavage to 5'-phosphomonoester.. Functionally, endonuclease that specifically degrades the RNA of RNA-DNA hybrids. In Albidiferax ferrireducens (strain ATCC BAA-621 / DSM 15236 / T118) (Rhodoferax ferrireducens), this protein is Ribonuclease H.